Reading from the N-terminus, the 179-residue chain is TM2 domain-containing protein Y66D12A.21 (179 aa).

Residues 1–18 form the signal peptide; it reads MRQLLLTLSLISVSASDA. Residues 19-82 lie on the Extracellular side of the membrane; sequence TVKCDDLDPN…IFNRTVPSAC (64 aa). An N-linked (GlcNAc...) asparagine glycan is attached at Asn-75. Residues 83–105 traverse the membrane as a helical segment; that stretch reads HYGAHVSYTTTVLLSIFLGFFGI. In terms of domain architecture, TM2 spans 88 to 135; it reads VSYTTTVLLSIFLGFFGIDRIYLGYYALGLIKMFSLGGLFVFWLVDII. At 106–109 the chain is on the cytoplasmic side; the sequence is DRIY. Residues 110 to 132 form a helical membrane-spanning segment; that stretch reads LGYYALGLIKMFSLGGLFVFWLV. Residues 133 to 179 are Extracellular-facing; the sequence is DIILISLQLLGPADGTAYAMAYYGPKAQMIRFDSHTNFSFYTCDGCL. The N-linked (GlcNAc...) asparagine glycan is linked to Asn-169.

It belongs to the TM2 family.

It is found in the membrane. The polypeptide is TM2 domain-containing protein Y66D12A.21 (Caenorhabditis elegans).